The primary structure comprises 81 residues: Exodeoxyribonuclease 7 small subunit (81 aa).

Residues 60–70 are compositionally biased toward basic and acidic residues; the sequence is LVDKDGNEKAL. Positions 60-81 are disordered; sequence LVDKDGNEKALDPQNASAPEEE.

The protein belongs to the XseB family. As to quaternary structure, heterooligomer composed of large and small subunits.

Its subcellular location is the cytoplasm. The enzyme catalyses Exonucleolytic cleavage in either 5'- to 3'- or 3'- to 5'-direction to yield nucleoside 5'-phosphates.. Functionally, bidirectionally degrades single-stranded DNA into large acid-insoluble oligonucleotides, which are then degraded further into small acid-soluble oligonucleotides. The polypeptide is Exodeoxyribonuclease 7 small subunit (Lactobacillus johnsonii (strain CNCM I-12250 / La1 / NCC 533)).